A 570-amino-acid polypeptide reads, in one-letter code: Pentatricopeptide repeat-containing protein At1g31430 (570 aa).

PPR repeat units lie at residues 10–44 (SLLMYNKMLKSLADGKSFTKVLALFGELRGQGLYP), 45–79 (DNFTLPVVLKSIGRLRKVIEGEKVHGYAVKAGLEF), 80–110 (DSYVSNSLMGMYASLGKIEITHKVFDEMPQR), 111–141 (DVVSWNGLISSYVGNGRFEDAIGVFKRMSQE), 147–177 (DEGTIVSTLSACSALKNLEIGERIYRFVVTE), 181–215 (SVRIGNALVDMFCKCGCLDKARAVFDSMRDKNVKC), 216–242 (WTSMVFGYVSTGRIDEARVLFERSPVK), 243–277 (DVVLWTAMMNGYVQFNRFDEALELFRCMQTAGIRP), 278–312 (DNFVLVSLLTGCAQTGALEQGKWIHGYINENRVTV), 313–343 (DKVVGTALVDMYAKCGCIETALEVFYEIKER), 344–378 (DTASWTSLIYGLAMNGMSGRALDLYYEMENVGVRL), 379–414 (DAITFVAVLTACNHGGFVAEGRKIFHSMTERHNVQP), and 415–449 (KSEHCSCLIDLLCRAGLLDEAEELIDKMRGESDET). A type E motif region spans residues 453-528 (VYCSLLSAAR…FPGCSSIEID (76 aa)). The segment at 529 to 561 (GVGHEFIVGDDLLSHPKMDEINSMLHQTTNLML) is type E(+) motif.

This sequence belongs to the PPR family. PCMP-E subfamily.

This is Pentatricopeptide repeat-containing protein At1g31430 (PCMP-E55) from Arabidopsis thaliana (Mouse-ear cress).